The sequence spans 249 residues: Ribosomal RNA small subunit methyltransferase J (249 aa).

Residues 101–102 (RD), 117–118 (ER), 153–154 (SS), and aspartate 171 contribute to the S-adenosyl-L-methionine site.

Belongs to the methyltransferase superfamily. RsmJ family.

The protein localises to the cytoplasm. It carries out the reaction guanosine(1516) in 16S rRNA + S-adenosyl-L-methionine = N(2)-methylguanosine(1516) in 16S rRNA + S-adenosyl-L-homocysteine + H(+). In terms of biological role, specifically methylates the guanosine in position 1516 of 16S rRNA. This is Ribosomal RNA small subunit methyltransferase J from Salmonella arizonae (strain ATCC BAA-731 / CDC346-86 / RSK2980).